The sequence spans 66 residues: Large ribosomal subunit protein bL33c (66 aa).

It belongs to the bacterial ribosomal protein bL33 family.

Its subcellular location is the plastid. The protein resides in the chloroplast. This is Large ribosomal subunit protein bL33c from Cucumis sativus (Cucumber).